A 522-amino-acid chain; its full sequence is Sensory neuron membrane protein 2 (522 aa).

Residues 1–7 lie on the Cytoplasmic side of the membrane; sequence MLGKHTK. The chain crosses the membrane as a helical span at residues 8-28; that stretch reads LFFGVSLVALIVSVILAAWGF. Residues 29–469 are Extracellular-facing; it reads PKIVSKQIQK…QSHTLLGYVE (441 aa). Residues Asn44, Asn67, Asn104, Asn166, Asn191, Asn228, Asn272, Asn314, and Asn343 are each glycosylated (N-linked (GlcNAc...) asparagine). Intrachain disulfides connect Cys268–Cys338, Cys299–Cys362, and Cys340–Cys351. Residues 470–490 form a helical membrane-spanning segment; sequence AVRWALLAIAIVATAISAIAV. Over 491 to 522 the chain is Cytoplasmic; the sequence is ARSGLIPVWPRNANSVSFILSPHPNSDVNKVH.

The protein belongs to the CD36 family. In terms of tissue distribution, detected in both male and female antennal tissues. Expression is two to three fold higher in male compared to female antenna. Detected at low levels in all body tissues except the female abdomen.

The protein resides in the cell membrane. In terms of biological role, plays an olfactory role that is not restricted to pheromone sensitivity. The protein is Sensory neuron membrane protein 2 of Ostrinia furnacalis (Asian corn borer).